The sequence spans 449 residues: Probable protoheme IX farnesyltransferase, mitochondrial (449 aa).

The span at 99-138 shows a compositional bias: low complexity; sequence TTSTTTTTNINENNIKNENNNENNNENSNNNNEQSIKSNQ. Residues 99-140 form a disordered region; that stretch reads TTSTTTTTNINENNIKNENNNENNNENSNNNNEQSIKSNQTK. 7 consecutive transmembrane segments (helical) span residues 163–183, 245–267, 279–299, 303–323, 352–372, 374–394, and 402–422; these read LTAI…WVVL, MAVT…LYCW, TWIG…AATG, AIGM…FLAL, SLAH…FFNF, VHPI…LPFI, and LYII…LLRQ.

This sequence belongs to the UbiA prenyltransferase family.

The protein resides in the mitochondrion membrane. In terms of biological role, converts protoheme IX and farnesyl diphosphate to heme O. In Dictyostelium discoideum (Social amoeba), this protein is Probable protoheme IX farnesyltransferase, mitochondrial (cox10).